An 87-amino-acid polypeptide reads, in one-letter code: Beta-toxin Ct17 (87 aa).

Positions 1–19 (MNSLLMITACLVLIGTVWA) are cleaved as a signal peptide. The LCN-type CS-alpha/beta domain occupies 20-85 (KKDGYLVDKT…TWPLPNKRCG (66 aa)). Disulfide bonds link Cys-31/Cys-84, Cys-35/Cys-60, Cys-44/Cys-65, and Cys-48/Cys-67. At Cys-84 the chain carries Cysteine amide.

It belongs to the long (4 C-C) scorpion toxin superfamily. Sodium channel inhibitor family. Beta subfamily. In terms of tissue distribution, expressed by the venom gland.

The protein resides in the secreted. Its function is as follows. Beta toxins bind voltage-independently at site-4 of sodium channels (Nav) and shift the voltage of activation toward more negative potentials thereby affecting sodium channel activation and promoting spontaneous and repetitive firing. Is possibly lethal to mice, freshwater shrimp and crickets. This is Beta-toxin Ct17 from Centruroides tecomanus (Scorpion).